A 459-amino-acid polypeptide reads, in one-letter code: Argininosuccinate lyase (459 aa).

The protein belongs to the lyase 1 family. Argininosuccinate lyase subfamily.

The protein resides in the cytoplasm. It carries out the reaction 2-(N(omega)-L-arginino)succinate = fumarate + L-arginine. It functions in the pathway amino-acid biosynthesis; L-arginine biosynthesis; L-arginine from L-ornithine and carbamoyl phosphate: step 3/3. This chain is Argininosuccinate lyase, found in Chromobacterium violaceum (strain ATCC 12472 / DSM 30191 / JCM 1249 / CCUG 213 / NBRC 12614 / NCIMB 9131 / NCTC 9757 / MK).